The primary structure comprises 217 residues: Probable GTP-binding protein EngB (217 aa).

In terms of domain architecture, EngB-type G spans V31–P205. GTP-binding positions include G39–S46, G66–L70, D84–G87, T151–D154, and F184–A186. Mg(2+) contacts are provided by S46 and T68.

This sequence belongs to the TRAFAC class TrmE-Era-EngA-EngB-Septin-like GTPase superfamily. EngB GTPase family. The cofactor is Mg(2+).

Necessary for normal cell division and for the maintenance of normal septation. The polypeptide is Probable GTP-binding protein EngB (Shewanella amazonensis (strain ATCC BAA-1098 / SB2B)).